The primary structure comprises 983 residues: Kinesin-like protein KIN-14I (983 aa).

Residues 44-166 (ASRRYEAANW…CVLAIKSYDE (123 aa)) enclose the Calponin-homology (CH) domain. Polar residues-rich tracts occupy residues 203 to 214 (SLSRTSSINNEK) and 278 to 287 (ESTSSQNNRS). Disordered stretches follow at residues 203–227 (SLSRTSSINNEKAPSENDSNKLSSP) and 276–295 (PRESTSSQNNRSFLKPLGER). The region spanning 399–724 (SIRVYCRVRP…LKFAERVATV (326 aa)) is the Kinesin motor domain. 481 to 488 (GQTGSGKT) provides a ligand contact to ATP. Residues 731-758 (VNNDTSDVKELKEQIATLKAALARKEAE) adopt a coiled-coil conformation. Disordered regions lie at residues 802 to 824 (TVNSPPWPPVASPGQAYREDDRS) and 921 to 983 (TRSN…NARH). Residues 939–951 (SPQSRNNSNNTVS) show a composition bias toward polar residues.

Belongs to the TRAFAC class myosin-kinesin ATPase superfamily. Kinesin family. KIN-14 subfamily.

This is Kinesin-like protein KIN-14I from Arabidopsis thaliana (Mouse-ear cress).